A 906-amino-acid chain; its full sequence is Protein translocase subunit SecA (906 aa).

ATP is bound by residues Q89, 107–111 (GEGKT), and D501. Zn(2+)-binding residues include C891, C893, C902, and H903.

Belongs to the SecA family. Monomer and homodimer. Part of the essential Sec protein translocation apparatus which comprises SecA, SecYEG and auxiliary proteins SecDF-YajC and YidC. It depends on Zn(2+) as a cofactor.

It is found in the cell inner membrane. Its subcellular location is the cytoplasm. The enzyme catalyses ATP + H2O + cellular proteinSide 1 = ADP + phosphate + cellular proteinSide 2.. Its function is as follows. Part of the Sec protein translocase complex. Interacts with the SecYEG preprotein conducting channel. Has a central role in coupling the hydrolysis of ATP to the transfer of proteins into and across the cell membrane, serving both as a receptor for the preprotein-SecB complex and as an ATP-driven molecular motor driving the stepwise translocation of polypeptide chains across the membrane. This is Protein translocase subunit SecA from Parvibaculum lavamentivorans (strain DS-1 / DSM 13023 / NCIMB 13966).